Reading from the N-terminus, the 437-residue chain is Cytochrome b (437 aa).

Residues 45 to 65 (WIWGIVLAFTLVLQIVTGIVL) traverse the membrane as a helical segment. His-97 and His-111 together coordinate heme b. Transmembrane regions (helical) follow at residues 100–120 (GASL…YYGS), 129–149 (WIVG…GYVL), 156–176 (FWGA…GPSI), 194–214 (FFSL…IHIW), 248–268 (FVIK…AVVA), 298–318 (FLPF…VILV), 330–350 (FFGV…PWLD), 365–385 (MWFW…AMPT), and 391–411 (WISL…LPLL). The heme b site is built by His-198 and His-212.

Belongs to the cytochrome b family. The main subunits of complex b-c1 are: cytochrome b, cytochrome c1 and the Rieske protein. Heme b is required as a cofactor.

It is found in the cell membrane. Functionally, component of the ubiquinol-cytochrome c reductase complex (complex III or cytochrome b-c1 complex), which is a respiratory chain that generates an electrochemical potential coupled to ATP synthesis. The protein is Cytochrome b (petB) of Rhodobacter capsulatus (Rhodopseudomonas capsulata).